A 409-amino-acid polypeptide reads, in one-letter code: MFINPRNVSNTFLQEPLRHSSNLTEMPVEAENVKSKTEYYNAWSEWERNAPPGNGEQREMAVSRLRDCLDRQAHELELNNLGLSSLPELPPHLESLVASCNSLTELPELPQSLKSLLVDNNNLKALSDLPPLLEYLGVSNNQLEKLPELQNSSFLKIIDVDNNSLKKLPDLPPSLEFIAAGNNQLEELPELQNLPFLTAIYADNNSLKKLPDLPLSLESIVAGNNILEELPELQNLPFLTTIYADNNLLKTLPDLPPSLEALNVRDNYLTDLPELPQSLTFLDVSENIFSGLSELPPNLYYLNASSNEIRSLCDLPPSLEELNVSNNKLIELPALPPRLERLIASFNHLAEVPELPQNLKQLHVEYNPLREFPDIPESVEDLRMNSERVVDPYEFAHETTDKLEDDVFE.

LRR repeat units lie at residues 72-91 (QAHE…ELPP), 92-113 (HLES…PQSL), 114-131 (KSLL…DLPP), 132-153 (LLEY…QNSS), 154-173 (FLKI…DLPP), 174-195 (SLEF…QNLP), 196-215 (FLTA…DLPL), 216-237 (SLES…QNLP), 238-257 (FLTT…DLPP), 258-279 (SLEA…PQSL), 280-297 (TFLD…ELPP), 298-317 (NLYY…DLPP), 318-339 (SLEE…PPRL), 340-357 (ERLI…ELPQ), and 358-379 (NLKQ…PESV). Residues asparagine 246 and aspartate 266 each contribute to the Ca(2+) site. 3 residues coordinate Ca(2+): asparagine 307, glutamate 308, and asparagine 326.

This sequence belongs to the LRR-containing bacterial E3 ligase family. In terms of assembly, homotetramer forming a hollow cylinder with an inner diameter of approximately 35 angstroms.

The protein resides in the cell outer membrane. It localises to the secreted. In terms of biological role, effector proteins function to alter host cell physiology and promote bacterial survival in host tissues. The sequence is that of Outer membrane protein YopM (yopM) from Yersinia pestis.